The chain runs to 1802 residues: Bromodomain and WD repeat-containing protein 3 (1802 aa).

WD repeat units follow at residues 170 to 209 (IKMH…IWAT), 213 to 251 (RLLA…VWCL), 255 to 297 (APVA…FWQW), 307 to 347 (RPVK…IYYL), 353 to 393 (EKIA…IWQY), 400 to 452 (SIVL…VWNS), 456 to 495 (QLLH…IWDL), and 502 to 542 (RNYF…LFGF). Residues S693 and S703 each carry the phosphoserine modification. The tract at residues 768-910 (KPSYTTQRND…PKQTRKKKGG (143 aa)) is disordered. Basic residues predominate over residues 785–795 (SLRRTQRKRQH). Polar residues predominate over residues 796–817 (TYQTRSNIEHNSQASCQNSGVQ). Positions 818 to 829 (EDSDSSSEEDET) are enriched in acidic residues. Over residues 846–859 (SESSSSDSSSEYSD) the composition is skewed to low complexity. Phosphoserine is present on residues S885 and S886. Residues 889–898 (ENLKSLEERQ) show a composition bias toward basic and acidic residues. The span at 899-909 (KKPKQTRKKKG) shows a compositional bias: basic residues. In terms of domain architecture, Bromo 1 spans 1138–1245 (WGAHSRDEEC…DVLLRFIGDQ (108 aa)). Disordered stretches follow at residues 1262–1292 (RNST…VKCR), 1326–1361 (RQPA…LSED), 1438–1500 (IQSQ…SPVS), and 1520–1725 (SSSS…RAKR). A compositionally biased stretch (acidic residues) spans 1266–1278 (DAEEDTEIVDLDS). The Bromo 2 domain occupies 1300–1430 (CNPDAWKKQC…ALFESHIKNI (131 aa)). The span at 1441–1453 (QKRRRPRYRKRLR) shows a compositional bias: basic residues. The segment covering 1454–1468 (SSSSSLSSSGAPSPK) has biased composition (low complexity). Residues 1479–1499 (KNDQNTSVSHARTSSPFSSPV) are compositionally biased toward polar residues. The span at 1520–1533 (SSSSFGGYSRSGNS) shows a compositional bias: low complexity. A phosphoserine mark is found at S1577 and S1579. Residues 1587 to 1600 (GEDKEKKETKEKSH) show a composition bias toward basic and acidic residues. A compositionally biased stretch (low complexity) spans 1601 to 1626 (LSTSESGELGSSLSSESTCGSDSDSE). Residues 1627–1643 (STSRTDQDYVDGDHDYS) show a composition bias toward basic and acidic residues. Composition is skewed to basic residues over residues 1649–1666 (RPKR…RNWK) and 1684–1697 (RGGR…RGSR). Residue S1763 is modified to Phosphoserine.

In terms of tissue distribution, found in most adult tissues. Down-regulated in a majority of the B-CLL cases examined.

In terms of biological role, plays a role in the regulation of cell morphology and cytoskeletal organization. Required in the control of cell shape. This is Bromodomain and WD repeat-containing protein 3 (BRWD3) from Homo sapiens (Human).